The following is a 141-amino-acid chain: Protein Turandot Z (141 aa).

Residues M1–A23 form the signal peptide.

It belongs to the Turandot family.

It localises to the secreted. A humoral factor that may play a role in stress tolerance. This chain is Protein Turandot Z, found in Drosophila yakuba (Fruit fly).